A 142-amino-acid chain; its full sequence is Small ribosomal subunit protein uS12y (142 aa).

At Pro61 the chain carries Hydroxyproline.

Belongs to the universal ribosomal protein uS12 family.

The sequence is that of Small ribosomal subunit protein uS12y (RPS23B) from Arabidopsis thaliana (Mouse-ear cress).